A 365-amino-acid polypeptide reads, in one-letter code: tRNA-specific 2-thiouridylase MnmA (365 aa).

ATP contacts are provided by residues A6–S13 and M32. The Nucleophile role is filled by C101. An intrachain disulfide couples C101 to C199. ATP is bound at residue G125. An interaction with tRNA region spans residues K148–Q150. Residue C199 is the Cysteine persulfide intermediate of the active site.

The protein belongs to the MnmA/TRMU family.

Its subcellular location is the cytoplasm. It catalyses the reaction S-sulfanyl-L-cysteinyl-[protein] + uridine(34) in tRNA + AH2 + ATP = 2-thiouridine(34) in tRNA + L-cysteinyl-[protein] + A + AMP + diphosphate + H(+). Functionally, catalyzes the 2-thiolation of uridine at the wobble position (U34) of tRNA, leading to the formation of s(2)U34. This Kineococcus radiotolerans (strain ATCC BAA-149 / DSM 14245 / SRS30216) protein is tRNA-specific 2-thiouridylase MnmA.